The following is a 949-amino-acid chain: Valine--tRNA ligase (949 aa).

The short motif at 40-50 (PNVTGSLHMGH) is the 'HIGH' region element. The short motif at 553 to 557 (KMSKS) is the 'KMSKS' region element. Lysine 556 provides a ligand contact to ATP. Residues 877-949 (MAGLIDKEAE…QEQQDKIKAL (73 aa)) are a coiled coil.

It belongs to the class-I aminoacyl-tRNA synthetase family. ValS type 1 subfamily. Monomer.

It localises to the cytoplasm. The enzyme catalyses tRNA(Val) + L-valine + ATP = L-valyl-tRNA(Val) + AMP + diphosphate. In terms of biological role, catalyzes the attachment of valine to tRNA(Val). As ValRS can inadvertently accommodate and process structurally similar amino acids such as threonine, to avoid such errors, it has a 'posttransfer' editing activity that hydrolyzes mischarged Thr-tRNA(Val) in a tRNA-dependent manner. The sequence is that of Valine--tRNA ligase from Idiomarina loihiensis (strain ATCC BAA-735 / DSM 15497 / L2-TR).